The sequence spans 216 residues: Small ribosomal subunit protein uS3 (216 aa).

One can recognise a KH type-2 domain in the interval 38-106 (IRGYLKKKLY…EIIINILEVR (69 aa)).

The protein belongs to the universal ribosomal protein uS3 family. Part of the 30S ribosomal subunit. Forms a tight complex with proteins S10 and S14.

Its function is as follows. Binds the lower part of the 30S subunit head. Binds mRNA in the 70S ribosome, positioning it for translation. This Syntrophus aciditrophicus (strain SB) protein is Small ribosomal subunit protein uS3.